Here is a 273-residue protein sequence, read N- to C-terminus: F-actin-capping protein subunit alpha (273 aa).

This sequence belongs to the F-actin-capping protein alpha subunit family. As to quaternary structure, heterodimer of an alpha and a beta subunit.

The protein resides in the cytoplasm. It localises to the cytoskeleton. F-actin-capping proteins bind in a Ca(2+)-independent manner to the fast growing ends of actin filaments (barbed end) thereby blocking the exchange of subunits at these ends. Unlike other capping proteins (such as gelsolin and severin), these proteins do not sever actin filaments. This is F-actin-capping protein subunit alpha (CAP1) from Gibberella zeae (strain ATCC MYA-4620 / CBS 123657 / FGSC 9075 / NRRL 31084 / PH-1) (Wheat head blight fungus).